Consider the following 610-residue polypeptide: tRNA uridine 5-carboxymethylaminomethyl modification enzyme MnmG (610 aa).

14–19 lines the FAD pocket; the sequence is GAGHAG. An NAD(+)-binding site is contributed by 274–288; the sequence is GPRYCPSIEDKIVKF.

The protein belongs to the MnmG family. As to quaternary structure, homodimer. Heterotetramer of two MnmE and two MnmG subunits. It depends on FAD as a cofactor.

The protein resides in the cytoplasm. Functionally, NAD-binding protein involved in the addition of a carboxymethylaminomethyl (cmnm) group at the wobble position (U34) of certain tRNAs, forming tRNA-cmnm(5)s(2)U34. This Chlamydia trachomatis serovar L2b (strain UCH-1/proctitis) protein is tRNA uridine 5-carboxymethylaminomethyl modification enzyme MnmG.